Here is a 160-residue protein sequence, read N- to C-terminus: 6,7-dimethyl-8-ribityllumazine synthase (160 aa).

Residues F28, 62–64 (ALE), and 86–88 (AVI) contribute to the 5-amino-6-(D-ribitylamino)uracil site. Residue 91–92 (ET) coordinates (2S)-2-hydroxy-3-oxobutyl phosphate. H94 (proton donor) is an active-site residue. N119 provides a ligand contact to 5-amino-6-(D-ribitylamino)uracil. A (2S)-2-hydroxy-3-oxobutyl phosphate-binding site is contributed by R133.

This sequence belongs to the DMRL synthase family.

It carries out the reaction (2S)-2-hydroxy-3-oxobutyl phosphate + 5-amino-6-(D-ribitylamino)uracil = 6,7-dimethyl-8-(1-D-ribityl)lumazine + phosphate + 2 H2O + H(+). It participates in cofactor biosynthesis; riboflavin biosynthesis; riboflavin from 2-hydroxy-3-oxobutyl phosphate and 5-amino-6-(D-ribitylamino)uracil: step 1/2. Catalyzes the formation of 6,7-dimethyl-8-ribityllumazine by condensation of 5-amino-6-(D-ribitylamino)uracil with 3,4-dihydroxy-2-butanone 4-phosphate. This is the penultimate step in the biosynthesis of riboflavin. The sequence is that of 6,7-dimethyl-8-ribityllumazine synthase from Nitrosospira multiformis (strain ATCC 25196 / NCIMB 11849 / C 71).